A 231-amino-acid polypeptide reads, in one-letter code: Thymidylate kinase (231 aa).

Residue Gly-10–Thr-17 participates in ATP binding.

Belongs to the thymidylate kinase family.

It carries out the reaction dTMP + ATP = dTDP + ADP. Its function is as follows. Phosphorylation of dTMP to form dTDP in both de novo and salvage pathways of dTTP synthesis. The polypeptide is Thymidylate kinase (Acaryochloris marina (strain MBIC 11017)).